Reading from the N-terminus, the 324-residue chain is Quinolinate synthase 1 (324 aa).

2 residues coordinate iminosuccinate: His-48 and Ser-66. [4Fe-4S] cluster is bound at residue Cys-111. Iminosuccinate-binding positions include 137–139 and Ser-154; that span reads YVN. Residue Cys-196 coordinates [4Fe-4S] cluster. Iminosuccinate-binding positions include 222–224 and Thr-239; that span reads HPE. Cys-282 provides a ligand contact to [4Fe-4S] cluster.

Belongs to the quinolinate synthase family. Type 2 subfamily. [4Fe-4S] cluster serves as cofactor.

It is found in the cytoplasm. It carries out the reaction iminosuccinate + dihydroxyacetone phosphate = quinolinate + phosphate + 2 H2O + H(+). Its pathway is cofactor biosynthesis; NAD(+) biosynthesis; quinolinate from iminoaspartate: step 1/1. In terms of biological role, catalyzes the condensation of iminoaspartate with dihydroxyacetone phosphate to form quinolinate. The polypeptide is Quinolinate synthase 1 (Mesorhizobium japonicum (strain LMG 29417 / CECT 9101 / MAFF 303099) (Mesorhizobium loti (strain MAFF 303099))).